Consider the following 689-residue polypeptide: Choline transporter-like 1 (689 aa).

The chain crosses the membrane as a helical span at residues 23-43 (IFWLVVYILFWIALLVIAVFS). Residue asparagine 134 is glycosylated (N-linked (GlcNAc...) asparagine). The next 2 helical transmembrane spans lie at 199 to 219 (FSDIYKTWPTVLLLVGLSLIF) and 233 to 255 (IISWLICIFVAVASIGITAVLWW). Asparagine 279 carries N-linked (GlcNAc...) asparagine glycosylation. The next 2 membrane-spanning stretches (helical) occupy residues 283 to 303 (IYVLAILATCIMIILLVVIYY) and 333 to 353 (VLAFIALAVFLSFWMVVIVCL). Asparagine 375 and asparagine 389 each carry an N-linked (GlcNAc...) asparagine glycan. 4 helical membrane passes run 412 to 432 (IYIIGLVWTSEFIFACQQLVI), 461 to 481 (LGSVAKGSFIITLFKIPRLIL), 562 to 582 (LVLFLGKLAVAALCGLISILM), and 591 to 611 (FYMAPVIIITLFSFFVAHIVL).

It belongs to the CTL (choline transporter-like) family.

The protein localises to the membrane. The polypeptide is Choline transporter-like 1 (Aedes aegypti (Yellowfever mosquito)).